The primary structure comprises 221 residues: Protein-L-isoaspartate O-methyltransferase (221 aa).

The active site involves S64.

Belongs to the methyltransferase superfamily. L-isoaspartyl/D-aspartyl protein methyltransferase family.

The protein resides in the cytoplasm. It catalyses the reaction [protein]-L-isoaspartate + S-adenosyl-L-methionine = [protein]-L-isoaspartate alpha-methyl ester + S-adenosyl-L-homocysteine. Catalyzes the methyl esterification of L-isoaspartyl residues in peptides and proteins that result from spontaneous decomposition of normal L-aspartyl and L-asparaginyl residues. It plays a role in the repair and/or degradation of damaged proteins. This is Protein-L-isoaspartate O-methyltransferase from Cytophaga hutchinsonii (strain ATCC 33406 / DSM 1761 / CIP 103989 / NBRC 15051 / NCIMB 9469 / D465).